Reading from the N-terminus, the 426-residue chain is uncharacterized protein (426 aa).

His-277 is a Zn(2+) binding site. Residue Glu-278 is part of the active site. His-281 and Glu-357 together coordinate Zn(2+).

The protein belongs to the peptidase M48B family. Zn(2+) serves as cofactor.

This is an uncharacterized protein from Bacillus subtilis (strain 168).